The chain runs to 327 residues: tRNA U34 carboxymethyltransferase (327 aa).

Carboxy-S-adenosyl-L-methionine contacts are provided by residues K91, W105, K110, G130, 181-182 (IE), M196, Y200, and R315.

This sequence belongs to the class I-like SAM-binding methyltransferase superfamily. CmoB family. Homotetramer.

The enzyme catalyses carboxy-S-adenosyl-L-methionine + 5-hydroxyuridine(34) in tRNA = 5-carboxymethoxyuridine(34) in tRNA + S-adenosyl-L-homocysteine + H(+). Functionally, catalyzes carboxymethyl transfer from carboxy-S-adenosyl-L-methionine (Cx-SAM) to 5-hydroxyuridine (ho5U) to form 5-carboxymethoxyuridine (cmo5U) at position 34 in tRNAs. The protein is tRNA U34 carboxymethyltransferase of Pectobacterium atrosepticum (strain SCRI 1043 / ATCC BAA-672) (Erwinia carotovora subsp. atroseptica).